We begin with the raw amino-acid sequence, 378 residues long: tRNA (guanine(26)-N(2))-dimethyltransferase (378 aa).

Residues 4–374 (KEVTEGKVRI…KGYEEIIRCV (371 aa)) form the Trm1 methyltransferase domain. Arg44, Arg69, Asp87, Asp114, and Ala115 together coordinate S-adenosyl-L-methionine. 4 residues coordinate Zn(2+): Cys246, Cys249, Cys263, and Cys266.

Belongs to the class I-like SAM-binding methyltransferase superfamily. Trm1 family.

The catalysed reaction is guanosine(26) in tRNA + 2 S-adenosyl-L-methionine = N(2)-dimethylguanosine(26) in tRNA + 2 S-adenosyl-L-homocysteine + 2 H(+). In terms of biological role, dimethylates a single guanine residue at position 26 of a number of tRNAs using S-adenosyl-L-methionine as donor of the methyl groups. The chain is tRNA (guanine(26)-N(2))-dimethyltransferase from Saccharolobus islandicus (strain M.14.25 / Kamchatka #1) (Sulfolobus islandicus).